Consider the following 334-residue polypeptide: N-acetyl-gamma-glutamyl-phosphate reductase (334 aa).

Residue cysteine 154 is part of the active site.

This sequence belongs to the NAGSA dehydrogenase family. Type 1 subfamily.

Its subcellular location is the cytoplasm. It catalyses the reaction N-acetyl-L-glutamate 5-semialdehyde + phosphate + NADP(+) = N-acetyl-L-glutamyl 5-phosphate + NADPH + H(+). It participates in amino-acid biosynthesis; L-arginine biosynthesis; N(2)-acetyl-L-ornithine from L-glutamate: step 3/4. Its function is as follows. Catalyzes the NADPH-dependent reduction of N-acetyl-5-glutamyl phosphate to yield N-acetyl-L-glutamate 5-semialdehyde. The chain is N-acetyl-gamma-glutamyl-phosphate reductase from Escherichia coli O157:H7.